Consider the following 358-residue polypeptide: DNA-directed RNA polymerase subunit alpha (358 aa).

An alpha N-terminal domain (alpha-NTD) region spans residues 1 to 231 (MIQNVTDDKI…NIFLSLSNSS (231 aa)). Residues 266–358 (QESLGWKKIS…LELINNKDIS (93 aa)) are alpha C-terminal domain (alpha-CTD).

Belongs to the RNA polymerase alpha chain family. In plastids the minimal PEP RNA polymerase catalytic core is composed of four subunits: alpha, beta, beta', and beta''. When a (nuclear-encoded) sigma factor is associated with the core the holoenzyme is formed, which can initiate transcription.

The protein resides in the plastid. Its subcellular location is the chloroplast. It catalyses the reaction RNA(n) + a ribonucleoside 5'-triphosphate = RNA(n+1) + diphosphate. DNA-dependent RNA polymerase catalyzes the transcription of DNA into RNA using the four ribonucleoside triphosphates as substrates. The chain is DNA-directed RNA polymerase subunit alpha from Chara vulgaris (Common stonewort).